The sequence spans 251 residues: 2,3-bisphosphoglycerate-dependent phosphoglycerate mutase (251 aa).

Substrate contacts are provided by residues 8 to 15 (RHGESLWN), 21 to 22 (TG), arginine 60, 87 to 90 (ERHY), lysine 98, 114 to 115 (RR), and 183 to 184 (GN). Catalysis depends on histidine 9, which acts as the Tele-phosphohistidine intermediate. Glutamate 87 (proton donor/acceptor) is an active-site residue.

The protein belongs to the phosphoglycerate mutase family. BPG-dependent PGAM subfamily.

It catalyses the reaction (2R)-2-phosphoglycerate = (2R)-3-phosphoglycerate. Its pathway is carbohydrate degradation; glycolysis; pyruvate from D-glyceraldehyde 3-phosphate: step 3/5. Functionally, catalyzes the interconversion of 2-phosphoglycerate and 3-phosphoglycerate. The chain is 2,3-bisphosphoglycerate-dependent phosphoglycerate mutase from Thermoanaerobacter sp. (strain X514).